Reading from the N-terminus, the 323-residue chain is Prenyl transferase (323 aa).

Isopentenyl diphosphate-binding residues include lysine 46, arginine 49, and histidine 81. Mg(2+) is bound by residues aspartate 88 and aspartate 92. An all-trans-polyprenyl diphosphate is bound at residue arginine 97. Arginine 98 contributes to the isopentenyl diphosphate binding site. An all-trans-polyprenyl diphosphate is bound by residues lysine 174, threonine 175, and glutamine 212.

The protein belongs to the FPP/GGPP synthase family. Mg(2+) serves as cofactor.

Possible role in synthesis of the nonaprenyl side chain of plastoquinone or in synthesis of other prenyl chains such as undekaprenyl pyrophosphate. In Synechocystis sp. (strain ATCC 27184 / PCC 6803 / Kazusa), this protein is Prenyl transferase (preA).